The sequence spans 242 residues: Small ribosomal subunit protein uS3 (242 aa).

Positions 39-109 (IRQYVEKNLA…QIRINVIEVA (71 aa)) constitute a KH type-2 domain. Residues 220 to 242 (VPAQAPRRQQRRRQQFEDRSSEG) are disordered. Residues 233-242 (QQFEDRSSEG) are compositionally biased toward basic and acidic residues.

This sequence belongs to the universal ribosomal protein uS3 family. In terms of assembly, part of the 30S ribosomal subunit. Forms a tight complex with proteins S10 and S14.

Its function is as follows. Binds the lower part of the 30S subunit head. Binds mRNA in the 70S ribosome, positioning it for translation. The sequence is that of Small ribosomal subunit protein uS3 from Microcystis aeruginosa (strain NIES-843 / IAM M-2473).